Here is a 512-residue protein sequence, read N- to C-terminus: Methionine--tRNA ligase (512 aa).

A 'HIGH' region motif is present at residues 11-21; sequence YYASGKPHIGH. Zn(2+) is bound by residues Cys126, Cys129, Cys143, and His147. Residues 301–305 carry the 'KMSKS' region motif; that stretch reads KMSKS. Lys304 serves as a coordination point for ATP.

Belongs to the class-I aminoacyl-tRNA synthetase family. MetG type 2A subfamily. In terms of assembly, monomer. Zn(2+) serves as cofactor.

The protein resides in the cytoplasm. It catalyses the reaction tRNA(Met) + L-methionine + ATP = L-methionyl-tRNA(Met) + AMP + diphosphate. Is required not only for elongation of protein synthesis but also for the initiation of all mRNA translation through initiator tRNA(fMet) aminoacylation. The sequence is that of Methionine--tRNA ligase (metG) from Mycoplasma genitalium (strain ATCC 33530 / DSM 19775 / NCTC 10195 / G37) (Mycoplasmoides genitalium).